A 90-amino-acid polypeptide reads, in one-letter code: Small ribosomal subunit protein bS16 (90 aa).

The protein belongs to the bacterial ribosomal protein bS16 family.

This chain is Small ribosomal subunit protein bS16, found in Anoxybacillus flavithermus (strain DSM 21510 / WK1).